The primary structure comprises 139 residues: uncharacterized protein (139 aa).

The segment at 1-116 is disordered; sequence MYNPWQVGAS…TRPRVVARGK (116 aa). Composition is skewed to low complexity over residues 50–70 and 84–110; these read RPRP…GPRP and LPAY…TRPR.

This is an uncharacterized protein from Homo sapiens (Human).